The following is a 325-amino-acid chain: MTITANKRHYLEKVSHQGIISALAFDQRGALKQMMAAHQEGEATVTQIETLKVLVSEELTPYASSILLDPEYGLLATKVKANQTGLLLAYEKTGYDATTTSRLPDCLVEWSVKRLKAAGADAIKFLLYYDVDGDEQINLQKQAYIERIGSECTAEDIPFFLELLSYDERISDNNSAAYAKLKPHKVNGAMSVFSDKRFGVDVLKVEVPVNMAYVEGFTEGEVHYSQAEAIKAFQDQEAASHLPYIYLSAGVSAKLFQETLYFAAAAGAQFSGVLCGRATWAGSVPVYITKGEDEARKWLCTEGFQNIDELNRVLEETASPWTEKI.

This sequence belongs to the aldolase LacD family.

The catalysed reaction is D-tagatofuranose 1,6-bisphosphate = D-glyceraldehyde 3-phosphate + dihydroxyacetone phosphate. It functions in the pathway carbohydrate metabolism; D-tagatose 6-phosphate degradation; D-glyceraldehyde 3-phosphate and glycerone phosphate from D-tagatose 6-phosphate: step 2/2. The protein is Tagatose 1,6-diphosphate aldolase 1 (lacD1) of Streptococcus pyogenes serotype M3 (strain SSI-1).